We begin with the raw amino-acid sequence, 612 residues long: Dihydroxy-acid dehydratase (612 aa).

Residue Asp-81 coordinates Mg(2+). Cys-122 provides a ligand contact to [2Fe-2S] cluster. Mg(2+) is bound by residues Asp-123 and Lys-124. An N6-carboxylysine modification is found at Lys-124. Cys-195 provides a ligand contact to [2Fe-2S] cluster. Residue Glu-491 coordinates Mg(2+). Ser-517 (proton acceptor) is an active-site residue.

This sequence belongs to the IlvD/Edd family. As to quaternary structure, homodimer. Requires [2Fe-2S] cluster as cofactor. It depends on Mg(2+) as a cofactor.

The enzyme catalyses (2R)-2,3-dihydroxy-3-methylbutanoate = 3-methyl-2-oxobutanoate + H2O. It catalyses the reaction (2R,3R)-2,3-dihydroxy-3-methylpentanoate = (S)-3-methyl-2-oxopentanoate + H2O. The protein operates within amino-acid biosynthesis; L-isoleucine biosynthesis; L-isoleucine from 2-oxobutanoate: step 3/4. It functions in the pathway amino-acid biosynthesis; L-valine biosynthesis; L-valine from pyruvate: step 3/4. In terms of biological role, functions in the biosynthesis of branched-chain amino acids. Catalyzes the dehydration of (2R,3R)-2,3-dihydroxy-3-methylpentanoate (2,3-dihydroxy-3-methylvalerate) into 2-oxo-3-methylpentanoate (2-oxo-3-methylvalerate) and of (2R)-2,3-dihydroxy-3-methylbutanoate (2,3-dihydroxyisovalerate) into 2-oxo-3-methylbutanoate (2-oxoisovalerate), the penultimate precursor to L-isoleucine and L-valine, respectively. The polypeptide is Dihydroxy-acid dehydratase (Rhizobium johnstonii (strain DSM 114642 / LMG 32736 / 3841) (Rhizobium leguminosarum bv. viciae)).